The chain runs to 2150 residues: Zinc finger protein sdc-3 (2150 aa).

The dosage compensation domain 1 stretch occupies residues 443-987; that stretch reads QEITSPMFAL…DQVENEEPER (545 aa). Disordered regions lie at residues 874-894, 1261-1373, 1411-1448, and 1491-1670; these read EKEW…EEED, GSVV…GPEV, FETS…GPIN, and EVLQ…SEKL. Residues 1267 to 1293 show a composition bias toward polar residues; that stretch reads TNQQEENVTSEGPTLQEGSSIPSSSHI. Residues 1321 to 1333 show a composition bias toward basic residues; that stretch reads KKSGKTTRGRPKK. Residues 1347-1357 are compositionally biased toward basic and acidic residues; sequence GQKEEAAHEPE. Positions 1504–1524 are enriched in basic residues; it reads SSKKRGRRRKKTPPHIAKARK. Residues 1508–1516 are sex determination domain; it reads RGRRRKKTP. Residues 1585–1598 are compositionally biased toward basic and acidic residues; it reads EDLHETERPGHVGE. The span at 1638–1648 shows a compositional bias: polar residues; sequence IQSQAGTNASP. 2 consecutive C2H2-type zinc fingers follow at residues 2078–2105 and 2117–2141; these read HKCV…GKLH and DDCQ…NHHH. A dosage compensation domain 2 region spans residues 2080 to 2105; it reads CVQCSIRNQSVYFSSYSLLELHGKLH.

In terms of assembly, component of the SDC complex, which consists of sdc-1, sdc-2 and sdc-3. Within the complex, interacts with sdc-1 and sdc-2. Interacts with dpy-21. Post-translationally, sumoylated. Sumoylation is important for assembly of the dosage compensation complex and its robust binding to the X chromosome. Expressed in somatic and in germline tissues in hermaphrodites (XX). In males (XO), only present in embryos younger than the 100-cell stage (at protein level).

The protein resides in the chromosome. The protein localises to the nucleus. Functionally, component of the SDC complex that functions in sex determination and in X chromosome dosage compensation specifically in hermaphrodite (XX) animals. Plays a central role in the recruitment of the condensin I-like dosage compensation complex to the male sex-determining autosomal gene her-1, thereby contributing to its repression and initiating hermaphrodite sexual development. Involved in the recruitment and assembly of the dosage compensation complex and the dosage compensation protein dpy-21 onto the X chromosomes in hermaphrodites, which leads to a reduction of X-linked gene transcription and an equalization of X-linked gene expression between the sexes. The sequence is that of Zinc finger protein sdc-3 (sdc-3) from Caenorhabditis elegans.